A 495-amino-acid chain; its full sequence is Probable cytochrome P450 513C1 (495 aa).

Residues 1–21 (MNYLVLILVSLVSIYFLFIKN) traverse the membrane as a helical segment. Cysteine 441 is a binding site for heme.

Belongs to the cytochrome P450 family. The cofactor is heme.

It is found in the membrane. The chain is Probable cytochrome P450 513C1 (cyp513C1) from Dictyostelium discoideum (Social amoeba).